The primary structure comprises 226 residues: Ribonuclease 3 (226 aa).

The 123-residue stretch at 7-129 folds into the RNase III domain; it reads DARLQQALGY…LFGAVFLDAG (123 aa). Residue glutamate 42 participates in Mg(2+) binding. Aspartate 46 is an active-site residue. 2 residues coordinate Mg(2+): aspartate 115 and glutamate 118. Glutamate 118 is a catalytic residue. Residues 156-226 form the DRBM domain; sequence DPKTRLQEIL…ARQACAELQR (71 aa).

Belongs to the ribonuclease III family. In terms of assembly, homodimer. Requires Mg(2+) as cofactor.

It localises to the cytoplasm. The catalysed reaction is Endonucleolytic cleavage to 5'-phosphomonoester.. In terms of biological role, digests double-stranded RNA. Involved in the processing of primary rRNA transcript to yield the immediate precursors to the large and small rRNAs (23S and 16S). Processes some mRNAs, and tRNAs when they are encoded in the rRNA operon. Processes pre-crRNA and tracrRNA of type II CRISPR loci if present in the organism. This is Ribonuclease 3 from Thiobacillus denitrificans (strain ATCC 25259 / T1).